The primary structure comprises 319 residues: Protoheme IX farnesyltransferase (319 aa).

8 consecutive transmembrane segments (helical) span residues 59–79 (IGLI…AGAF), 108–128 (EALV…WFGA), 131–151 (LSAW…TIIL), 158–178 (NIVW…AAVT), 183–203 (WPAI…YWPL), 232–252 (VVLY…AGGA), 254–274 (WVYT…SHAL), and 299–319 (LTLL…VIGG).

The protein belongs to the UbiA prenyltransferase family. Protoheme IX farnesyltransferase subfamily.

It localises to the cell membrane. The catalysed reaction is heme b + (2E,6E)-farnesyl diphosphate + H2O = Fe(II)-heme o + diphosphate. It participates in porphyrin-containing compound metabolism; heme O biosynthesis; heme O from protoheme: step 1/1. Converts heme B (protoheme IX) to heme O by substitution of the vinyl group on carbon 2 of heme B porphyrin ring with a hydroxyethyl farnesyl side group. This chain is Protoheme IX farnesyltransferase, found in Pseudarthrobacter chlorophenolicus (strain ATCC 700700 / DSM 12829 / CIP 107037 / JCM 12360 / KCTC 9906 / NCIMB 13794 / A6) (Arthrobacter chlorophenolicus).